A 156-amino-acid chain; its full sequence is Small ribosomal subunit protein uS7 (156 aa).

Belongs to the universal ribosomal protein uS7 family. Part of the 30S ribosomal subunit. Contacts proteins S9 and S11.

Functionally, one of the primary rRNA binding proteins, it binds directly to 16S rRNA where it nucleates assembly of the head domain of the 30S subunit. Is located at the subunit interface close to the decoding center, probably blocks exit of the E-site tRNA. This Marinobacter nauticus (strain ATCC 700491 / DSM 11845 / VT8) (Marinobacter aquaeolei) protein is Small ribosomal subunit protein uS7.